The following is a 156-amino-acid chain: Ribosomal RNA large subunit methyltransferase H (156 aa).

Residues Leu-73, Gly-104, and 123-128 contribute to the S-adenosyl-L-methionine site; that span reads IGPLTL.

This sequence belongs to the RNA methyltransferase RlmH family. In terms of assembly, homodimer.

It is found in the cytoplasm. It carries out the reaction pseudouridine(1915) in 23S rRNA + S-adenosyl-L-methionine = N(3)-methylpseudouridine(1915) in 23S rRNA + S-adenosyl-L-homocysteine + H(+). In terms of biological role, specifically methylates the pseudouridine at position 1915 (m3Psi1915) in 23S rRNA. This is Ribosomal RNA large subunit methyltransferase H from Xanthomonas campestris pv. campestris (strain 8004).